Here is a 531-residue protein sequence, read N- to C-terminus: Retinoid isomerohydrolase (531 aa).

Cys112 carries the S-palmitoyl cysteine; in membrane form lipid modification. Residues His180, His241, and His313 each contribute to the Fe cation site. Cys329 is lipidated: S-palmitoyl cysteine; in membrane form. His526 provides a ligand contact to Fe cation.

The protein belongs to the carotenoid oxygenase family. Requires Fe(2+) as cofactor. Post-translationally, palmitoylated. In terms of tissue distribution, retinal pigment epithelium-specific.

Its subcellular location is the cytoplasm. It is found in the cell membrane. The enzyme catalyses an all-trans-retinyl ester + H2O = 11-cis-retinol + a fatty acid + H(+). It carries out the reaction lutein = (3R,3'S)-zeaxanthin. It catalyses the reaction all-trans-retinyl hexadecanoate + H2O = 11-cis-retinol + hexadecanoate + H(+). Its function is as follows. Plays important roles in the production of 11-cis retinal and in visual pigment regeneration. Capable of catalyzing the isomerization of lutein to meso-zeaxanthin an eye-specific carotenoid. The sequence is that of Retinoid isomerohydrolase (rpe65a) from Danio rerio (Zebrafish).